Here is a 625-residue protein sequence, read N- to C-terminus: Chaperone protein DnaK (625 aa).

Residue T197 is modified to Phosphothreonine; by autocatalysis. The segment at 598-625 (AYAKEQGGTQQGTDTKKKDDDVIDAEVE) is disordered.

The protein belongs to the heat shock protein 70 family.

Its function is as follows. Acts as a chaperone. The chain is Chaperone protein DnaK from Helicobacter hepaticus (strain ATCC 51449 / 3B1).